The chain runs to 210 residues: Synaptosomal-associated protein 25 (210 aa).

A disordered region spans residues 1–23 (MENSVENSMDPRSEQEEMQRCAD). Residues 9-20 (MDPRSEQEEMQR) are compositionally biased toward basic and acidic residues. T-SNARE coiled-coil homology domains follow at residues 23 to 85 (DQIT…LSDL) and 147 to 209 (DARE…ATKM).

It belongs to the SNAP-25 family.

It is found in the synapse. The protein localises to the synaptosome. The protein resides in the cell membrane. Its function is as follows. May play an important role in the synaptic function of specific neuronal systems. Associates with proteins involved in vesicle docking and membrane fusion. The polypeptide is Synaptosomal-associated protein 25 (snap25) (Torpedo marmorata (Marbled electric ray)).